A 600-amino-acid chain; its full sequence is NADH-quinone oxidoreductase subunit C/D (600 aa).

Positions 1–190 (MVNNMTDLTA…DPFELTKAKQ (190 aa)) are NADH dehydrogenase I subunit C. Positions 214 to 600 (DFMFLNLGPN…IDFVMSDVDR (387 aa)) are NADH dehydrogenase I subunit D.

In the N-terminal section; belongs to the complex I 30 kDa subunit family. It in the C-terminal section; belongs to the complex I 49 kDa subunit family. In terms of assembly, NDH-1 is composed of 13 different subunits. Subunits NuoB, CD, E, F, and G constitute the peripheral sector of the complex.

It is found in the cell inner membrane. It catalyses the reaction a quinone + NADH + 5 H(+)(in) = a quinol + NAD(+) + 4 H(+)(out). Functionally, NDH-1 shuttles electrons from NADH, via FMN and iron-sulfur (Fe-S) centers, to quinones in the respiratory chain. The immediate electron acceptor for the enzyme in this species is believed to be ubiquinone. Couples the redox reaction to proton translocation (for every two electrons transferred, four hydrogen ions are translocated across the cytoplasmic membrane), and thus conserves the redox energy in a proton gradient. The protein is NADH-quinone oxidoreductase subunit C/D of Salmonella arizonae (strain ATCC BAA-731 / CDC346-86 / RSK2980).